Reading from the N-terminus, the 521-residue chain is Glucose-6-phosphate isomerase (521 aa).

The active-site Proton donor is the glutamate 351. Active-site residues include histidine 382 and lysine 491.

This sequence belongs to the GPI family.

The protein resides in the cytoplasm. It catalyses the reaction alpha-D-glucose 6-phosphate = beta-D-fructose 6-phosphate. The protein operates within carbohydrate biosynthesis; gluconeogenesis. It functions in the pathway carbohydrate degradation; glycolysis; D-glyceraldehyde 3-phosphate and glycerone phosphate from D-glucose: step 2/4. In terms of biological role, catalyzes the reversible isomerization of glucose-6-phosphate to fructose-6-phosphate. The polypeptide is Glucose-6-phosphate isomerase (Polaromonas naphthalenivorans (strain CJ2)).